Here is a 278-residue protein sequence, read N- to C-terminus: UPF0276 protein Sama_1305 (278 aa).

This sequence belongs to the UPF0276 family.

The sequence is that of UPF0276 protein Sama_1305 from Shewanella amazonensis (strain ATCC BAA-1098 / SB2B).